The chain runs to 354 residues: MYECIQDYLTNHKDEKNIYVNKCISIVGSPLSAGQSLSGVNKACDNLRKFGLHDVIKAVGWGYEDIGNIGEKIPINGFLKQENIEKENDQINNNNPSYYNNIKNAEVIGKFSEKLFQTMSSELKKKNFILNIGGDHGVAFSSILSMLQTYNNLKVIWIDAHGDINIPETSPSGNYHGMSLAHALGLFKKKVPYFEWSEKLLHLKPENVAIIGIRDIDKYEKIILKKCNINYYTMFDIDKKGIYNIICEALNKIDPNKNSPIHISLDIDSVDSIYAPGTGTIAKGGLNYREIHLLIKSISDTKRVVSMDIVEYNPLLDESDKAVHGDSLPIDPNATKTGKLCLELIARVLGNDIV.

Histidine 136, aspartate 159, histidine 161, and aspartate 163 together coordinate Mn(2+). L-arginine contacts are provided by asparagine 165, serine 172, and aspartate 217. The Mn(2+) site is built by aspartate 266 and aspartate 268.

Belongs to the arginase family. In terms of assembly, homotrimer; oligomerization is dependent on Mn(2+) binding. It depends on Mn(2+) as a cofactor.

The catalysed reaction is L-arginine + H2O = urea + L-ornithine. It participates in nitrogen metabolism; urea cycle; L-ornithine and urea from L-arginine: step 1/1. Catalyzes the hydrolysis of L-arginine into urea and L-ornithine, which is a precursor for polyamine biosynthesis. May play a role in parasite intra-hepatic development during the host liver stage. The sequence is that of Arginase from Plasmodium berghei (strain Anka).